We begin with the raw amino-acid sequence, 274 residues long: Thiazole synthase (274 aa).

Lys115 (schiff-base intermediate with DXP) is an active-site residue. Residues Gly176, 202-203, and 224-225 contribute to the 1-deoxy-D-xylulose 5-phosphate site; these read AG and NS.

The protein belongs to the ThiG family. Homotetramer. Forms heterodimers with either ThiH or ThiS.

The protein localises to the cytoplasm. The enzyme catalyses [ThiS sulfur-carrier protein]-C-terminal-Gly-aminoethanethioate + 2-iminoacetate + 1-deoxy-D-xylulose 5-phosphate = [ThiS sulfur-carrier protein]-C-terminal Gly-Gly + 2-[(2R,5Z)-2-carboxy-4-methylthiazol-5(2H)-ylidene]ethyl phosphate + 2 H2O + H(+). The protein operates within cofactor biosynthesis; thiamine diphosphate biosynthesis. Catalyzes the rearrangement of 1-deoxy-D-xylulose 5-phosphate (DXP) to produce the thiazole phosphate moiety of thiamine. Sulfur is provided by the thiocarboxylate moiety of the carrier protein ThiS. In vitro, sulfur can be provided by H(2)S. The chain is Thiazole synthase from Parasynechococcus marenigrum (strain WH8102).